The primary structure comprises 228 residues: C-type lectin domain-containing protein 88 (228 aa).

Residues methionine 1–alanine 18 form the signal peptide. Serine 27 carries O-linked (Xyl...) (chondroitin sulfate) serine glycosylation. One can recognise a C-type lectin domain in the interval tyrosine 88–glutamate 218. 2 disulfides stabilise this stretch: cysteine 109/cysteine 217 and cysteine 188/cysteine 209. N-linked (GlcNAc...) asparagine glycosylation is present at asparagine 220.

The protein is C-type lectin domain-containing protein 88 of Caenorhabditis elegans.